Here is a 208-residue protein sequence, read N- to C-terminus: Uracil phosphoribosyltransferase (208 aa).

5-phospho-alpha-D-ribose 1-diphosphate is bound by residues arginine 78, arginine 103, and 130–138 (DPMLATGGS). Residues isoleucine 193 and 198–200 (GDA) each bind uracil. Aspartate 199 is a binding site for 5-phospho-alpha-D-ribose 1-diphosphate.

This sequence belongs to the UPRTase family. It depends on Mg(2+) as a cofactor.

It catalyses the reaction UMP + diphosphate = 5-phospho-alpha-D-ribose 1-diphosphate + uracil. The protein operates within pyrimidine metabolism; UMP biosynthesis via salvage pathway; UMP from uracil: step 1/1. Allosterically activated by GTP. In terms of biological role, catalyzes the conversion of uracil and 5-phospho-alpha-D-ribose 1-diphosphate (PRPP) to UMP and diphosphate. This chain is Uracil phosphoribosyltransferase, found in Haemophilus influenzae (strain PittEE).